Here is a 193-residue protein sequence, read N- to C-terminus: Bcl-2-like protein 2 (193 aa).

Alanine 2 carries the post-translational modification N-acetylalanine. Residues 9–29 carry the BH4 motif; the sequence is DTRALVADFVGYKLRQKGYVC. The short motif at 85-104 is the BH1 element; that stretch reads ELFQGGPNWGRLVAFFVFGA. Positions 136-151 match the BH2 motif; that stretch reads DWIHSSGGWAEFTALY.

Belongs to the Bcl-2 family. In terms of assembly, interacts with HIF3A isoform 2 (via C-terminus domain). Interacts with BOP. As to expression, expressed in almost all myeloid cell lines and in a wide range of tissues, with highest levels in brain, colon, and salivary gland.

Its subcellular location is the mitochondrion membrane. In terms of biological role, promotes cell survival. Blocks dexamethasone-induced apoptosis. Mediates survival of postmitotic Sertoli cells by suppressing death-promoting activity of BAX. The chain is Bcl-2-like protein 2 (Bcl2l2) from Mus musculus (Mouse).